A 328-amino-acid polypeptide reads, in one-letter code: MGLVRSLCLLITFLNCLIISVHGQATARPGPVSGTRIGFYLTTCPRAETIVRNAVNAGFSSDPRIAPGILRMHFHDCFVQGCDGSILISGANTERTAGPNLNLQGFEVIDNAKTQLEAACPGVVSCADILALAARDTVILTQGTGWQVPTGRRDGRVSLASNANNLPGPRDSVAVQQQKFSALGLNTRDLVVLVGGHTIGTAGCGVFRNRLFNTTGQTADPTIDPTFLAQLQTQCPQNGDGSVRVDLDTGSGSTWDTSYYNNLSRGRGVLQSDQVLWTDPATRPIVQQLMAPRSTFNVEFARSMVRMSNIGVVTGANGEIRRVCSAVN.

The first 23 residues, 1-23, serve as a signal peptide directing secretion; sequence MGLVRSLCLLITFLNCLIISVHG. Cystine bridges form between C44–C120, C77–C82, C126–C324, and C204–C235. Catalysis depends on H75, which acts as the Proton acceptor. 5 residues coordinate Ca(2+): D76, V79, G81, D83, and S85. P167 is a binding site for substrate. H197 contributes to the heme b binding site. T198 contacts Ca(2+). An N-linked (GlcNAc...) asparagine glycan is attached at N213. Ca(2+) is bound by residues D248, S251, and D256. N262 carries N-linked (GlcNAc...) asparagine glycosylation.

It belongs to the peroxidase family. Classical plant (class III) peroxidase subfamily. The cofactor is heme b. Ca(2+) serves as cofactor. As to expression, slightly expressed in roots.

Its subcellular location is the secreted. It catalyses the reaction 2 a phenolic donor + H2O2 = 2 a phenolic radical donor + 2 H2O. Removal of H(2)O(2), oxidation of toxic reductants, biosynthesis and degradation of lignin, suberization, auxin catabolism, response to environmental stresses such as wounding, pathogen attack and oxidative stress. These functions might be dependent on each isozyme/isoform in each plant tissue. This is Peroxidase 71 (PER71) from Arabidopsis thaliana (Mouse-ear cress).